Reading from the N-terminus, the 244-residue chain is MIRTDAKDGALVLFSGGQDSATCVAWALERYQTVETLGFDYGQRHRVELECREGVREALKHRFPAWSDRLGDDHMIDLSVLGAISDTAMTRTIEIETTANGLPNTFVPGRNLMFMTIAAAIAYRRGLRVLVGGMCETDFSGYPDCRDDTMKALQVALNLGMDTRMVLETPLMWLDKAQTWQLAEQLGGEALVELIRVETHTCYVGERAELHDWGFGCGECPACKLRKRGYEAYLKGERVTEAPL.

14–24 (FSGGQDSATCV) provides a ligand contact to ATP. Zn(2+)-binding residues include C202, C217, C220, and C223.

It belongs to the QueC family. The cofactor is Zn(2+).

It catalyses the reaction 7-carboxy-7-deazaguanine + NH4(+) + ATP = 7-cyano-7-deazaguanine + ADP + phosphate + H2O + H(+). It functions in the pathway purine metabolism; 7-cyano-7-deazaguanine biosynthesis. In terms of biological role, catalyzes the ATP-dependent conversion of 7-carboxy-7-deazaguanine (CDG) to 7-cyano-7-deazaguanine (preQ(0)). The protein is 7-cyano-7-deazaguanine synthase of Burkholderia cenocepacia (strain HI2424).